The chain runs to 234 residues: 7-cyano-7-deazaguanine synthase (234 aa).

15-25 contributes to the ATP binding site; the sequence is LSGGLDSSTCL. Cys-199, Cys-208, Cys-211, and Cys-214 together coordinate Zn(2+).

Belongs to the QueC family. Requires Zn(2+) as cofactor.

It catalyses the reaction 7-carboxy-7-deazaguanine + NH4(+) + ATP = 7-cyano-7-deazaguanine + ADP + phosphate + H2O + H(+). It participates in purine metabolism; 7-cyano-7-deazaguanine biosynthesis. Its function is as follows. Catalyzes the ATP-dependent conversion of 7-carboxy-7-deazaguanine (CDG) to 7-cyano-7-deazaguanine (preQ(0)). The polypeptide is 7-cyano-7-deazaguanine synthase (Anaeromyxobacter dehalogenans (strain 2CP-C)).